We begin with the raw amino-acid sequence, 1373 residues long: DNA-directed RNA polymerase subunit beta (1373 aa).

It belongs to the RNA polymerase beta chain family. The RNAP catalytic core consists of 2 alpha, 1 beta, 1 beta' and 1 omega subunit. When a sigma factor is associated with the core the holoenzyme is formed, which can initiate transcription.

The enzyme catalyses RNA(n) + a ribonucleoside 5'-triphosphate = RNA(n+1) + diphosphate. Functionally, DNA-dependent RNA polymerase catalyzes the transcription of DNA into RNA using the four ribonucleoside triphosphates as substrates. This is DNA-directed RNA polymerase subunit beta from Lawsonia intracellularis (strain PHE/MN1-00).